Here is a 367-residue protein sequence, read N- to C-terminus: Tape measure protein (367 aa).

This sequence belongs to the skunalikevirus tape measure protein family.

The protein localises to the virion. Tape measure protein. Serves as a base for tail tube protein polymerization and acts as a template for tail length determination. This is Tape measure protein from Lactococcus lactis (Lactococcus lactis bacteriophage F4-1).